The primary structure comprises 97 residues: MRKILIFIVRIYQTLISPLFPPSCRYYPTCSNYMIDALKKHGPILGLIMGISRTLRCNPFVRGGVDPVPDNFTVFRNPHPERYEDEIIASKFHSNSK.

This sequence belongs to the UPF0161 family.

The protein resides in the cell membrane. Its function is as follows. Could be involved in insertion of integral membrane proteins into the membrane. The protein is Putative membrane protein insertion efficiency factor of Lactobacillus helveticus (strain DPC 4571).